We begin with the raw amino-acid sequence, 403 residues long: E2F transcription factor-like E2FE (403 aa).

Residues 34–99 (RKQKSLGLLC…RAKNQYTWKG (66 aa)) mediate DNA binding. Positions 128–167 (VKGSDDEDDDEESSQPHSSSQTDSSKPGSLPQSSDPSKID) are disordered. Over residues 142–152 (QPHSSSQTDSS) the composition is skewed to low complexity. Residues 153-163 (KPGSLPQSSDP) are compositionally biased toward polar residues. The DNA-binding element occupies 169 to 250 (RREKSLGLLT…SRKPAFKWLG (82 aa)). The segment at 282 to 319 (VKRSKSSSSSQENATERRLKMKKHSTPESSYNKSFDVH) is disordered.

The protein belongs to the E2F/DP family. Expressed exclusively in mitotically dividing cells. Highly expressed in young leaves and mature flowers. Lower expression in young stalk and in young and mature flowers.

The protein localises to the nucleus. Functionally, inhibitor of E2F-dependent activation of gene expression. Binds specifically the E2 recognition site without interacting with DP proteins and prevents transcription activation by E2F/DP heterodimers. Controls the timing of endocycle onset and inhibits endoreduplication. The sequence is that of E2F transcription factor-like E2FE (E2FE) from Arabidopsis thaliana (Mouse-ear cress).